Here is a 202-residue protein sequence, read N- to C-terminus: NADH-quinone oxidoreductase subunit C (202 aa).

It belongs to the complex I 30 kDa subunit family. As to quaternary structure, NDH-1 is composed of 14 different subunits. Subunits NuoB, C, D, E, F, and G constitute the peripheral sector of the complex.

The protein resides in the cell inner membrane. The enzyme catalyses a quinone + NADH + 5 H(+)(in) = a quinol + NAD(+) + 4 H(+)(out). Its function is as follows. NDH-1 shuttles electrons from NADH, via FMN and iron-sulfur (Fe-S) centers, to quinones in the respiratory chain. The immediate electron acceptor for the enzyme in this species is believed to be ubiquinone. Couples the redox reaction to proton translocation (for every two electrons transferred, four hydrogen ions are translocated across the cytoplasmic membrane), and thus conserves the redox energy in a proton gradient. The sequence is that of NADH-quinone oxidoreductase subunit C from Acidithiobacillus ferrooxidans (strain ATCC 23270 / DSM 14882 / CIP 104768 / NCIMB 8455) (Ferrobacillus ferrooxidans (strain ATCC 23270)).